Here is an 88-residue protein sequence, read N- to C-terminus: RNA-binding protein Hfq (88 aa).

In terms of domain architecture, Sm spans 10–70; it reads DRFLNILRTK…ISTILPAEYI (61 aa).

It belongs to the Hfq family. Homohexamer.

RNA chaperone that binds small regulatory RNA (sRNAs) and mRNAs to facilitate mRNA translational regulation in response to envelope stress, environmental stress and changes in metabolite concentrations. Also binds with high specificity to tRNAs. This is RNA-binding protein Hfq from Fervidobacterium nodosum (strain ATCC 35602 / DSM 5306 / Rt17-B1).